The sequence spans 657 residues: Threonine--tRNA ligase (657 aa).

The TGS domain occupies 7 to 70 (SQTQVTVTLP…SEDASIEIVT (64 aa)). Residues 253 to 555 (DHRKLGAELE…LIEHTGGNFP (303 aa)) are catalytic. The Zn(2+) site is built by Cys-351, His-402, and His-532.

It belongs to the class-II aminoacyl-tRNA synthetase family. As to quaternary structure, homodimer. Requires Zn(2+) as cofactor.

Its subcellular location is the cytoplasm. The catalysed reaction is tRNA(Thr) + L-threonine + ATP = L-threonyl-tRNA(Thr) + AMP + diphosphate + H(+). In terms of biological role, catalyzes the attachment of threonine to tRNA(Thr) in a two-step reaction: L-threonine is first activated by ATP to form Thr-AMP and then transferred to the acceptor end of tRNA(Thr). Also edits incorrectly charged L-seryl-tRNA(Thr). This chain is Threonine--tRNA ligase, found in Prosthecochloris aestuarii (strain DSM 271 / SK 413).